Here is a 409-residue protein sequence, read N- to C-terminus: Pyrophosphate--fructose 6-phosphate 1-phosphotransferase (409 aa).

Gly14 lines the diphosphate pocket. Position 123 (Asp123) interacts with Mg(2+). Substrate-binding positions include 151–153 (TID), 196–198 (MGR), Glu268, and 325–328 (YFAR). Asp153 functions as the Proton acceptor in the catalytic mechanism.

This sequence belongs to the phosphofructokinase type A (PFKA) family. PPi-dependent PFK group II subfamily. Clade 'P' sub-subfamily. As to quaternary structure, homotetramer. Mg(2+) is required as a cofactor.

The protein localises to the cytoplasm. The enzyme catalyses beta-D-fructose 6-phosphate + diphosphate = beta-D-fructose 1,6-bisphosphate + phosphate + H(+). The protein operates within carbohydrate degradation; glycolysis; D-glyceraldehyde 3-phosphate and glycerone phosphate from D-glucose: step 3/4. Non-allosteric. Its function is as follows. Catalyzes the phosphorylation of D-fructose 6-phosphate, the first committing step of glycolysis. Uses inorganic phosphate (PPi) as phosphoryl donor instead of ATP like common ATP-dependent phosphofructokinases (ATP-PFKs), which renders the reaction reversible, and can thus function both in glycolysis and gluconeogenesis. Consistently, PPi-PFK can replace the enzymes of both the forward (ATP-PFK) and reverse (fructose-bisphosphatase (FBPase)) reactions. In Methylotuvimicrobium alcaliphilum (strain DSM 19304 / NCIMB 14124 / VKM B-2133 / 20Z) (Methylomicrobium alcaliphilum), this protein is Pyrophosphate--fructose 6-phosphate 1-phosphotransferase.